The following is a 545-amino-acid chain: Sensory neuron membrane protein 1 (545 aa).

Topologically, residues 1–10 are cytoplasmic; that stretch reads MELKERNFKK. A helical transmembrane segment spans residues 11 to 31; that stretch reads IGLICVAVLLCGMVFSYGIFP. At 32-464 the chain is on the extracellular side; that stretch reads SILRFMIKQN…LFLGLKFNAT (433 aa). N-linked (GlcNAc...) asparagine glycans are attached at residues Asn69, Asn214, and Asn227. 3 disulfides stabilise this stretch: Cys266–Cys331, Cys295–Cys351, and Cys333–Cys340. Asn444 and Asn462 each carry an N-linked (GlcNAc...) asparagine glycan. The chain crosses the membrane as a helical span at residues 465–485; sequence VKWLTIIIGTVGAVGSAYMYF. Topologically, residues 486-545 are cytoplasmic; sequence RKETKTTDVAPVDVSTPDTNPSSAKDGVVNVSLGRNLPPVIDGLDKPPKLRATELQQERY.

The protein belongs to the CD36 family. As to expression, selectively expressed in antenna.

Its subcellular location is the cell membrane. Functionally, plays an olfactory role that is not restricted to pheromone sensitivity. This is Sensory neuron membrane protein 1 (snmp1) from Anopheles gambiae (African malaria mosquito).